The primary structure comprises 366 residues: Histidinol-phosphate aminotransferase (366 aa).

Lysine 227 is subject to N6-(pyridoxal phosphate)lysine.

Belongs to the class-II pyridoxal-phosphate-dependent aminotransferase family. Histidinol-phosphate aminotransferase subfamily. In terms of assembly, homodimer. The cofactor is pyridoxal 5'-phosphate.

It catalyses the reaction L-histidinol phosphate + 2-oxoglutarate = 3-(imidazol-4-yl)-2-oxopropyl phosphate + L-glutamate. Its pathway is amino-acid biosynthesis; L-histidine biosynthesis; L-histidine from 5-phospho-alpha-D-ribose 1-diphosphate: step 7/9. The sequence is that of Histidinol-phosphate aminotransferase from Campylobacter hominis (strain ATCC BAA-381 / DSM 21671 / CCUG 45161 / LMG 19568 / NCTC 13146 / CH001A).